A 215-amino-acid chain; its full sequence is uncharacterized protein (215 aa).

A signal peptide spans 1–29 (MDKVQSGFLILFLFLMECQLHLCLPYADG). The Extracellular segment spans residues 30-100 (LHPTGNITGL…IIRHRPALVK (71 aa)). The helical transmembrane segment at 101–121 (VILISSVAFSIALICGMAISY) threads the bilayer. Residues 122 to 215 (MIYRLAQAEE…ASHNGKMEDL (94 aa)) are Cytoplasmic-facing. The interval 191 to 215 (LKEEQNSVTENKTKNASHNGKMEDL) is disordered. Positions 196 to 208 (NSVTENKTKNASH) are enriched in polar residues.

The protein resides in the membrane. This is an uncharacterized protein from Homo sapiens (Human).